Consider the following 135-residue polypeptide: Histone H2B.4 (135 aa).

Composition is skewed to basic and acidic residues over residues 1–12 and 23–35; these read MAPKAAEKKPVE and EKKVPTSKEGGEK. The segment at 1–43 is disordered; that stretch reads MAPKAAEKKPVEKTPAVKKPKAEKKVPTSKEGGEKKGKKKSKK. N6-acetyllysine occurs at positions 8 and 24. K131 participates in a covalent cross-link: Glycyl lysine isopeptide (Lys-Gly) (interchain with G-Cter in ubiquitin).

It belongs to the histone H2B family. As to quaternary structure, the nucleosome is a histone octamer containing two molecules each of H2A, H2B, H3 and H4 assembled in one H3-H4 heterotetramer and two H2A-H2B heterodimers. The octamer wraps approximately 147 bp of DNA. Post-translationally, can be acetylated to form H2BK6ac and H2BK33ac. Monoubiquitinated to form H2BK143ub1; may give a specific tag for epigenetic transcriptional activation. In terms of tissue distribution, expressed preferentially in meristematic tissues.

The protein localises to the nucleus. The protein resides in the chromosome. Its function is as follows. Core component of nucleosome. Nucleosomes wrap and compact DNA into chromatin, limiting DNA accessibility to the cellular machineries which require DNA as a template. Histones thereby play a central role in transcription regulation, DNA repair, DNA replication and chromosomal stability. DNA accessibility is regulated via a complex set of post-translational modifications of histones, also called histone code, and nucleosome remodeling. In Triticum aestivum (Wheat), this protein is Histone H2B.4 (TH153).